The following is a 1034-amino-acid chain: Beta-galactosidase (1034 aa).

Catalysis depends on glutamate 481, which acts as the Proton donor. The Nucleophile role is filled by glutamate 547.

Belongs to the glycosyl hydrolase 2 family.

It catalyses the reaction Hydrolysis of terminal non-reducing beta-D-galactose residues in beta-D-galactosides.. This Priestia megaterium (strain DSM 319 / IMG 1521) (Bacillus megaterium) protein is Beta-galactosidase (bgaM).